The sequence spans 360 residues: Pyrimidine monooxygenase RutA (360 aa).

FMN-binding positions include 49 to 50 (IK), Asn115, Glu124, 140 to 141 (RY), and Ser190.

It belongs to the NtaA/SnaA/DszA monooxygenase family. RutA subfamily.

It catalyses the reaction uracil + FMNH2 + NADH + O2 = (Z)-3-ureidoacrylate + FMN + NAD(+) + H2O + H(+). It carries out the reaction thymine + FMNH2 + NADH + O2 = (Z)-2-methylureidoacrylate + FMN + NAD(+) + H2O + H(+). Its function is as follows. Catalyzes the pyrimidine ring opening between N-3 and C-4 by an unusual flavin hydroperoxide-catalyzed mechanism, adding oxygen atoms in the process to yield ureidoacrylate peracid, that immediately reacts with FMN forming ureidoacrylate and FMN-N(5)-oxide. The FMN-N(5)-oxide reacts spontaneously with NADH to produce FMN. Requires the flavin reductase RutF to regenerate FMN in vivo. The chain is Pyrimidine monooxygenase RutA from Pseudomonas syringae pv. syringae (strain B728a).